Here is a 436-residue protein sequence, read N- to C-terminus: Citrate synthase (436 aa).

Residues H313 and D371 contribute to the active site.

Belongs to the citrate synthase family. As to quaternary structure, homohexamer.

It catalyses the reaction oxaloacetate + acetyl-CoA + H2O = citrate + CoA + H(+). It functions in the pathway carbohydrate metabolism; tricarboxylic acid cycle; isocitrate from oxaloacetate: step 1/2. This chain is Citrate synthase (aarA), found in Acetobacter aceti.